A 378-amino-acid polypeptide reads, in one-letter code: tRNA N(3)-cytidine methyltransferase METTL2 (378 aa).

S-adenosyl-L-methionine-binding residues include Trp-78, Tyr-82, Gly-188, Asp-213, Asp-239, Leu-240, and Ile-260.

It belongs to the methyltransferase superfamily. METL family. Monomer. Interacts with DALRD3.

It is found in the cytoplasm. It carries out the reaction cytidine(32) in tRNA(Thr) + S-adenosyl-L-methionine = N(3)-methylcytidine(32) in tRNA(Thr) + S-adenosyl-L-homocysteine + H(+). The enzyme catalyses cytidine(32) in tRNA(Arg)(CCU) + S-adenosyl-L-methionine = N(3)-methylcytidine(32) in tRNA(Arg)(CCU) + S-adenosyl-L-homocysteine + H(+). S-adenosyl-L-methionine-dependent methyltransferase that mediates N(3)-methylcytidine modification of residue 32 of the tRNA anticodon loop of tRNA(Thr)(UGU) and tRNA(Arg)(CCU). N(3)-methylcytidine methylation by METTL2 requires the N6-threonylcarbamoylation of tRNA (t6A37) by the EKC/KEOPS complex as prerequisite. The chain is tRNA N(3)-cytidine methyltransferase METTL2 (METTL2) from Bos taurus (Bovine).